Here is a 353-residue protein sequence, read N- to C-terminus: S-adenosylmethionine:tRNA ribosyltransferase-isomerase (353 aa).

The protein belongs to the QueA family. In terms of assembly, monomer.

The protein localises to the cytoplasm. It catalyses the reaction 7-aminomethyl-7-carbaguanosine(34) in tRNA + S-adenosyl-L-methionine = epoxyqueuosine(34) in tRNA + adenine + L-methionine + 2 H(+). The protein operates within tRNA modification; tRNA-queuosine biosynthesis. Its function is as follows. Transfers and isomerizes the ribose moiety from AdoMet to the 7-aminomethyl group of 7-deazaguanine (preQ1-tRNA) to give epoxyqueuosine (oQ-tRNA). This is S-adenosylmethionine:tRNA ribosyltransferase-isomerase from Paraburkholderia phymatum (strain DSM 17167 / CIP 108236 / LMG 21445 / STM815) (Burkholderia phymatum).